Reading from the N-terminus, the 510-residue chain is NAD(P)H-quinone oxidoreductase subunit 2 A, chloroplastic (510 aa).

13 helical membrane passes run 24–44, 57–77, 99–119, 124–144, 149–169, 183–203, 229–249, 295–315, 323–343, 354–374, 395–415, 418–438, and 484–504; these read LLLF…GLIL, IPWL…ALLF, IFQF…VEYI, MAIT…MFLC, LITI…LSGY, YLLM…WLYG, ISIA…PAPF, WHLL…LIAI, MLAY…IVGD, YMLF…LFGL, ALSS…AGFF, LYLF…IGLL, and MILC…IIAI.

It belongs to the complex I subunit 2 family. In terms of assembly, NDH is composed of at least 16 different subunits, 5 of which are encoded in the nucleus.

The protein localises to the plastid. It is found in the chloroplast thylakoid membrane. The enzyme catalyses a plastoquinone + NADH + (n+1) H(+)(in) = a plastoquinol + NAD(+) + n H(+)(out). The catalysed reaction is a plastoquinone + NADPH + (n+1) H(+)(in) = a plastoquinol + NADP(+) + n H(+)(out). Its function is as follows. NDH shuttles electrons from NAD(P)H:plastoquinone, via FMN and iron-sulfur (Fe-S) centers, to quinones in the photosynthetic chain and possibly in a chloroplast respiratory chain. The immediate electron acceptor for the enzyme in this species is believed to be plastoquinone. Couples the redox reaction to proton translocation, and thus conserves the redox energy in a proton gradient. This is NAD(P)H-quinone oxidoreductase subunit 2 A, chloroplastic from Piper cenocladum (Ant piper).